Reading from the N-terminus, the 96-residue chain is Small ribosomal subunit protein uS19 (96 aa).

The tract at residues 1–30 (MARSIKKGPFADKHLTKKVEDANKGNKKSV) is disordered. Basic and acidic residues predominate over residues 9-24 (PFADKHLTKKVEDANK).

This sequence belongs to the universal ribosomal protein uS19 family.

Its function is as follows. Protein S19 forms a complex with S13 that binds strongly to the 16S ribosomal RNA. The sequence is that of Small ribosomal subunit protein uS19 from Anaeromyxobacter sp. (strain Fw109-5).